The following is a 395-amino-acid chain: Accessory Sec system protein translocase subunit SecY2 (395 aa).

Helical transmembrane passes span 13–33 (VSFS…PLPF), 63–83 (ISIF…IQLL), 102–122 (LMQF…VFAF), 128–148 (GLED…VVWL), 157–177 (VGAS…PNII), 190–210 (WIWL…WLAF), 239–259 (MAAM…LMVG), 272–292 (VFQA…FTFV), 326–346 (LIWI…VFGL), and 355–375 (YAGF…MGGI).

This sequence belongs to the SecY/SEC61-alpha family. SecY2 subfamily. As to quaternary structure, component of the accessory SecA2/SecY2 protein translocase complex required to export cell wall proteins. May form heterotrimers with SecE and SecG subunits.

The protein resides in the cell membrane. Part of the accessory SecA2/SecY2 system specifically required for export of possible cell wall proteins. The central subunit of a protein translocation channel. This is Accessory Sec system protein translocase subunit SecY2 from Lactobacillus johnsonii (strain CNCM I-12250 / La1 / NCC 533).